The chain runs to 448 residues: MPLIIVALGILALLFLIMGLKLNTFISLLVVSFGVALALGMPFDKVVSSIEAGIGGTLGHIALIFGLGAMLGKLIADSGGAQRIAMTLVNKFGEKNIQWAVVIASFIIGIALFFEVGLVLLIPIVFAISRELKISILFLGIPMVAALSVTHGFLPPHPGPTAIAGEYGANIGEVLLYGFIVAVPTVLIAGPLFTKFAKKIVPASFAKNGNIASLGTQKTFNLEETPGFGISVFTAMLPIIIMSVATIIDLLQETIGFADNGVLAFIRLIGNASTAMIISLLVAVYTMGIKRNIPVKTVMDSCSTAISQIGMMLLIIGGGGAFKQVLINGGVGDYVADLFKGTALSPIILAWLIAAILRISLGSATVAALSTTGLVIPLLGHSDVNLALVVLATGAGSVIASHVNDAGFWMFKEYFGLSMKETFATWTLLETIISVAGLGFILLLSLVV.

The next 12 membrane-spanning stretches (helical) occupy residues 2–22 (PLII…GLKL), 23–43 (NTFI…GMPF), 52–72 (AGIG…AMLG), 106–126 (FIIG…PIVF), 134–154 (ISIL…HGFL), 174–194 (VLLY…PLFT), 228–248 (FGIS…ATII), 269–289 (IGNA…TMGI), 302–322 (CSTA…GGAF), 347–367 (IILA…ATVA), 373–393 (GLVI…VLAT), and 428–448 (LLET…SLVV).

It belongs to the GntP permease family.

The protein localises to the cell membrane. The protein operates within carbohydrate acid metabolism; D-gluconate degradation. The polypeptide is Gluconate permease (gntP) (Bacillus subtilis (strain 168)).